The sequence spans 331 residues: N-arachidonyl glycine receptor (331 aa).

Topologically, residues 1–26 are extracellular; that stretch reads MITLNNQDQPVPFNSSHPDEYKIAAL. Asparagine 14 carries an N-linked (GlcNAc...) asparagine glycan. The chain crosses the membrane as a helical span at residues 27–47; it reads VFYSCIFIIGLFVNITALWVF. The Cytoplasmic portion of the chain corresponds to 48–56; that stretch reads SCTTKKRTT. The helical transmembrane segment at 57 to 77 threads the bilayer; sequence VTIYMMNVALVDLIFIMTLPF. The Extracellular portion of the chain corresponds to 78–95; the sequence is RMFYYAKDEWPFGEYFCQ. Cysteine 94 and cysteine 172 are disulfide-bonded. A helical transmembrane segment spans residues 96-116; that stretch reads ILGALTVFYPSIALWLLAFIS. At 117–138 the chain is on the cytoplasmic side; that stretch reads ADRYMAIVQPKYAKELKNTCKA. Residues 139–159 traverse the membrane as a helical segment; sequence VLACVGVWIMTLTTTTPLLLL. Over 160 to 191 the chain is Extracellular; sequence YKDPDKDSTPATCLKISDIIYLKAVNVLNLTR. The helical transmembrane segment at 192–212 threads the bilayer; sequence LTFFFLIPLFIMIGCYLVIIH. Topologically, residues 213 to 232 are cytoplasmic; that stretch reads NLLHGRTSKLKPKVKEKSIR. A helical transmembrane segment spans residues 233 to 253; that stretch reads IIITLLVQVLVCFMPFHICFA. Residues 254–268 are Extracellular-facing; that stretch reads FLMLGTGENSYNPWG. Residues 269-289 traverse the membrane as a helical segment; the sequence is AFTTFLMNLSTCLDVILYYIV. The Cytoplasmic portion of the chain corresponds to 290–331; that stretch reads SKQFQARVISVMLYRNYLRSMRRKSFRSGSLRSLSNINSEML. Serine 322 bears the Phosphoserine mark.

Belongs to the G-protein coupled receptor 1 family. Expressed in midpiece of spermatozoon (at protein level). Most abundant in testis and spleen. Highly expressed in CD4 and CD8-positive T-cells as well as CD19-positive B-cells.

Its subcellular location is the cell membrane. The protein localises to the cytoplasmic vesicle membrane. In terms of biological role, g protein-coupled receptor (GPCR) that plays a role in diverse physiological processes particularly within the immune and nervous systems. Becomes active when triggered by various endogenous ligands including endocannabinoid N-arachidonyl glycine (NAGly), delta-9-tetrahydrocannabinol or resolvin D2/RvD2 derived from the omega-3 fatty acid docosahexaenoic acid (DHA). Upon RvD2 binding, facilitates the resolution of inflammation, aiding in tissue repair and homeostasis. Mechanistically, RvD2 ligation initiates Galphas protein coupling, activation of cAMP-PKA signaling pathway and phosphorylation of STAT3, leading to RvD2-stimulated macrophage phagocytosis. Mediates NAGly-induced process of reorganization of actin filaments and induction of acrosomal exocytosis. Activation by N-arachidonoyl glycine (NAGly) can also induce apoptosis in macrophages. Plays a role in homeostasis of CD8+ subsets of intraepithelial lymphocytes (IELs) (CD8alphaalpha and CD8alphabeta IELs) in small intestine by supporting preferential migration of CD8alphaalpha T-cells to intraepithelial compartment over lamina propria compartment, and by mediating their reconstitution into small intestine after bone marrow transplant. Also participates in hypotensive responses, mediating reduction in intraocular and blood pressure. The protein is N-arachidonyl glycine receptor (GPR18) of Homo sapiens (Human).